The following is a 322-amino-acid chain: Acetylglutamate kinase (322 aa).

Substrate-binding positions include 89 to 90, Arg111, and Asn217; that span reads GG.

Belongs to the acetylglutamate kinase family. ArgB subfamily.

It localises to the cytoplasm. The catalysed reaction is N-acetyl-L-glutamate + ATP = N-acetyl-L-glutamyl 5-phosphate + ADP. It participates in amino-acid biosynthesis; L-arginine biosynthesis; N(2)-acetyl-L-ornithine from L-glutamate: step 2/4. Its function is as follows. Catalyzes the ATP-dependent phosphorylation of N-acetyl-L-glutamate. The protein is Acetylglutamate kinase of Ehrlichia ruminantium (strain Gardel).